The sequence spans 190 residues: MARANEIKRGMAVNYNGKLLLVRDIDIQSPSARGAATLYKMRFSDVRTGLKVEERFKGDDLLETITLSRRPVTFSYIDGDEYVFMDDEDYTPYTFKKEQIEDELLFIPEGGIPGMQVLTMEGQVLALELPQTVDMEIVETTPSIKGASASARTKPAAMSTGLVVQVPEYLSSGEKIRIHVEERRFMGRAD.

It belongs to the elongation factor P family.

The protein is Elongation factor P-like protein of Edwardsiella ictaluri (strain 93-146).